The sequence spans 302 residues: MDYLLQVKVGALVGLLLLTLFFGFIPARMKWFHVTGGTELHKAVLSFVSCFAGGVFLSACLLDIIPDYLSDIHGELQKRDLDDGFPLPEFIMACGFFTVLILEKMVLSCTEGHRNEETAPLLAPAAPNGHAHGHPSVNDLEGSGHHVHVDFHAHSSFRSFMLFLSLSLHSVFEGLAIGLQTTNAKVLEICIAILVHKSIIVFSLSVKLVQSAVKPLWVVLYVTVFAIMSPLGIGIGIVVIETERQAGGLIQAVLEGLAAGTFIYITFLEILPHELNSSERPLLKVLFLLCGFSIMAALCFLG.

Topologically, residues 1–6 (MDYLLQ) are extracellular. The chain crosses the membrane as a helical span at residues 7–27 (VKVGALVGLLLLTLFFGFIPA). The Cytoplasmic segment spans residues 28–44 (RMKWFHVTGGTELHKAV). A helical transmembrane segment spans residues 45 to 65 (LSFVSCFAGGVFLSACLLDII). The Extracellular portion of the chain corresponds to 66–86 (PDYLSDIHGELQKRDLDDGFP). The chain crosses the membrane as a helical span at residues 87-107 (LPEFIMACGFFTVLILEKMVL). Residues 108–158 (SCTEGHRNEETAPLLAPAAPNGHAHGHPSVNDLEGSGHHVHVDFHAHSSFR) lie on the Cytoplasmic side of the membrane. A helical membrane pass occupies residues 159–179 (SFMLFLSLSLHSVFEGLAIGL). At 180-185 (QTTNAK) the chain is on the extracellular side. A helical transmembrane segment spans residues 186-206 (VLEICIAILVHKSIIVFSLSV). At 207–219 (KLVQSAVKPLWVV) the chain is on the cytoplasmic side. The chain crosses the membrane as a helical span at residues 220 to 240 (LYVTVFAIMSPLGIGIGIVVI). Residues 241-247 (ETERQAG) are Extracellular-facing. Residues 248 to 268 (GLIQAVLEGLAAGTFIYITFL) traverse the membrane as a helical segment. At 269–281 (EILPHELNSSERP) the chain is on the cytoplasmic side. Residues 282–302 (LLKVLFLLCGFSIMAALCFLG) form a helical membrane-spanning segment.

The protein belongs to the ZIP transporter (TC 2.A.5) family. Ubiquitous. Highest levels in ovary, high levels in heart, eye, kidney and brain, moderate levels in intestine and low levels in gill and skin.

It is found in the cell membrane. Its subcellular location is the endoplasmic reticulum membrane. It catalyses the reaction Zn(2+)(in) = Zn(2+)(out). In terms of biological role, transporter for the divalent cation Zn(2+). Mediates the influx of Zn(2+) into cells from extracellular space. This Danio rerio (Zebrafish) protein is Zinc transporter ZIP1 (slc39a1).